The primary structure comprises 339 residues: Homeobox protein DBX2 (339 aa).

The segment at residues 186–245 (GILRRAVFSEDQRKALEKMFQKQKYISKTDRKKLAINLGLKESQVKIWFQNRRMKWRNSK) is a DNA-binding region (homeobox). Residues 282 to 318 (VPQQHSSPRWRENSPEPSERLIQESSGAPPPEANSLQ) form a disordered region. A compositionally biased stretch (basic and acidic residues) spans 290-303 (RWRENSPEPSERLI).

Belongs to the H2.0 homeobox family.

The protein localises to the nucleus. The polypeptide is Homeobox protein DBX2 (DBX2) (Homo sapiens (Human)).